We begin with the raw amino-acid sequence, 476 residues long: Bifunctional protein HldE (476 aa).

A ribokinase region spans residues M1–S318. ATP is bound at residue N195–E198. The active site involves D264. The segment at M344–G476 is cytidylyltransferase.

This sequence in the N-terminal section; belongs to the carbohydrate kinase PfkB family. The protein in the C-terminal section; belongs to the cytidylyltransferase family. Homodimer.

It catalyses the reaction D-glycero-beta-D-manno-heptose 7-phosphate + ATP = D-glycero-beta-D-manno-heptose 1,7-bisphosphate + ADP + H(+). The catalysed reaction is D-glycero-beta-D-manno-heptose 1-phosphate + ATP + H(+) = ADP-D-glycero-beta-D-manno-heptose + diphosphate. It participates in nucleotide-sugar biosynthesis; ADP-L-glycero-beta-D-manno-heptose biosynthesis; ADP-L-glycero-beta-D-manno-heptose from D-glycero-beta-D-manno-heptose 7-phosphate: step 1/4. It functions in the pathway nucleotide-sugar biosynthesis; ADP-L-glycero-beta-D-manno-heptose biosynthesis; ADP-L-glycero-beta-D-manno-heptose from D-glycero-beta-D-manno-heptose 7-phosphate: step 3/4. Catalyzes the phosphorylation of D-glycero-D-manno-heptose 7-phosphate at the C-1 position to selectively form D-glycero-beta-D-manno-heptose-1,7-bisphosphate. Its function is as follows. Catalyzes the ADP transfer from ATP to D-glycero-beta-D-manno-heptose 1-phosphate, yielding ADP-D-glycero-beta-D-manno-heptose. This is Bifunctional protein HldE from Aliivibrio salmonicida (strain LFI1238) (Vibrio salmonicida (strain LFI1238)).